Here is a 113-residue protein sequence, read N- to C-terminus: Na(+)/H(+) antiporter subunit C1 (113 aa).

The next 3 helical transmembrane spans lie at 1 to 21 (MEII…YLVL), 28 to 48 (IVMG…TMGG), and 72 to 92 (LILT…VLAF).

The protein belongs to the CPA3 antiporters (TC 2.A.63) subunit C family. May form a heterooligomeric complex that consists of seven subunits: mnhA1, mnhB1, mnhC1, mnhD1, mnhE1, mnhF1 and mnhG1.

Its subcellular location is the cell membrane. Mnh complex is a Na(+)/H(+) antiporter involved in Na(+) excretion. The chain is Na(+)/H(+) antiporter subunit C1 (mnhC1) from Staphylococcus haemolyticus (strain JCSC1435).